Here is a 392-residue protein sequence, read N- to C-terminus: Small ribosomal subunit protein bS1 (392 aa).

4 consecutive S1 motif domains span residues 16–90 (GDKV…LSKR), 108–173 (DEII…LSRK), 194–262 (GDVI…LSIK), and 279–348 (DDVI…LSIK).

The protein belongs to the bacterial ribosomal protein bS1 family.

Functionally, binds mRNA; thus facilitating recognition of the initiation point. It is needed to translate mRNA with a short Shine-Dalgarno (SD) purine-rich sequence. The sequence is that of Small ribosomal subunit protein bS1 (rpsA) from Staphylococcus haemolyticus (strain JCSC1435).